A 190-amino-acid chain; its full sequence is Pyridoxal 5'-phosphate synthase subunit PdxT (190 aa).

Residue 46–48 (GES) participates in L-glutamine binding. Cysteine 78 (nucleophile) is an active-site residue. Residues arginine 108 and 137 to 138 (IR) each bind L-glutamine. Catalysis depends on charge relay system residues histidine 174 and glutamate 176.

This sequence belongs to the glutaminase PdxT/SNO family. In terms of assembly, in the presence of PdxS, forms a dodecamer of heterodimers. Only shows activity in the heterodimer.

It catalyses the reaction aldehydo-D-ribose 5-phosphate + D-glyceraldehyde 3-phosphate + L-glutamine = pyridoxal 5'-phosphate + L-glutamate + phosphate + 3 H2O + H(+). The catalysed reaction is L-glutamine + H2O = L-glutamate + NH4(+). The protein operates within cofactor biosynthesis; pyridoxal 5'-phosphate biosynthesis. Its function is as follows. Catalyzes the hydrolysis of glutamine to glutamate and ammonia as part of the biosynthesis of pyridoxal 5'-phosphate. The resulting ammonia molecule is channeled to the active site of PdxS. The chain is Pyridoxal 5'-phosphate synthase subunit PdxT from Chloroflexus aurantiacus (strain ATCC 29366 / DSM 635 / J-10-fl).